A 360-amino-acid chain; its full sequence is GDSL esterase/lipase At1g58430 (360 aa).

The signal sequence occupies residues 1–23 (MWTSKTISFTLFITTTLLGSCNA). Asn-22 is a glycosylation site (N-linked (GlcNAc...) asparagine). Ser-42 (nucleophile) is an active-site residue. N-linked (GlcNAc...) asparagine glycosylation is found at Asn-104 and Asn-326. Catalysis depends on residues Asp-334 and His-337.

It belongs to the 'GDSL' lipolytic enzyme family.

It localises to the secreted. This is GDSL esterase/lipase At1g58430 from Arabidopsis thaliana (Mouse-ear cress).